The following is a 283-amino-acid chain: Elongation factor Ts (283 aa).

The involved in Mg(2+) ion dislocation from EF-Tu stretch occupies residues 80-83 (TDFV).

This sequence belongs to the EF-Ts family.

It is found in the cytoplasm. Its function is as follows. Associates with the EF-Tu.GDP complex and induces the exchange of GDP to GTP. It remains bound to the aminoacyl-tRNA.EF-Tu.GTP complex up to the GTP hydrolysis stage on the ribosome. This chain is Elongation factor Ts, found in Shigella boydii serotype 18 (strain CDC 3083-94 / BS512).